The sequence spans 455 residues: Golgi pH regulator (455 aa).

The next 2 membrane-spanning stretches (helical) occupy residues 5-25 (IDSS…WLFF) and 46-66 (VTFA…LGVL). Residue Asn67 is glycosylated (N-linked (GlcNAc...) asparagine). 3 helical membrane-spanning segments follow: residues 79–99 (LCVI…YFVV), 111–131 (LFAC…GDPF), and 150–170 (VGVI…VNCP). N-linked (GlcNAc...) asparagine glycans are attached at residues Asn180 and Asn243. 4 consecutive transmembrane segments (helical) span residues 290–310 (GYFF…NIVF), 343–363 (ISFI…LITL), 378–398 (VIVL…VLLI), and 425–445 (WFDV…YLAH).

It belongs to the Golgi pH regulator (TC 1.A.38) family. Homotrimer.

The protein localises to the golgi apparatus membrane. It carries out the reaction iodide(out) = iodide(in). The catalysed reaction is chloride(in) = chloride(out). The enzyme catalyses bromide(in) = bromide(out). It catalyses the reaction fluoride(in) = fluoride(out). In terms of biological role, voltage-gated channel that enables the transfer of anions such as iodide, chloride, bromide and fluoride which may function in counter-ion conductance and participates in Golgi acidification. This chain is Golgi pH regulator, found in Gallus gallus (Chicken).